The following is a 1510-amino-acid chain: ABC transporter C family MRP4 (1510 aa).

Helical transmembrane passes span 12–32 (EAVAATAHAALLALAALLLLL), 55–75 (PAVVVGDGAGGALAAATAGAW), 78–98 (AVLASCAYALLSQVAVLSYEV), 109–129 (ALLLPAVQAVSWAALLALALQ), 138–158 (FPALVRLWWVVSFALCVVIAY), 177–197 (MVANFASVPALGFLCLVGVMG), 319–339 (TFAAVNTIVSYVGPYLISYFV), 342–362 (LSGNIAFPHEGYILASIFFVA), 373–393 (WYLGVDIMGIHVKSGLTAMVY), 427–447 (AWYFHDIWMLPLQIILALAIL), 453–473 (IAMVSTLVATVLSIAASVPVA), and 540–560 (FVFWSSPIFVAVITFGTCILL). One can recognise an ABC transmembrane type-1 1 domain in the interval 320–595 (FAAVNTIVSY…FPDLISMMAQ (276 aa)). Residues 629–852 (VDIKDGAFSW…GTDFNALVSA (224 aa)) enclose the ABC transporter 1 domain. 664-671 (GVIGSGKS) provides a ligand contact to ATP. A disordered region spans residues 889-925 (LKNKMCENGQPSNTRGIKEKKKKEERKKKRTVQEEER). Residues 906–918 (KEKKKKEERKKKR) are compositionally biased toward basic residues. 6 helical membrane-spanning segments follow: residues 945 to 965 (GTLIPLIILAQTMFQVLQIAS), 985 to 1005 (SVVLLVVYMSLAFGSSLFVFM), 1060 to 1082 (IAFRLGGFASTTIQLLGIVAVMS), 1086 to 1108 (WQVLILIVPMAVACMWMQRYYIA), 1154 to 1174 (LLDCFARPLFSSLAAIEWLCL), and 1179 to 1199 (LSTFVFAFCMAILVSFPPGTI). In terms of domain architecture, ABC transmembrane type-1 2 spans 950-1220 (LIILAQTMFQ…GLNLNARMSR (271 aa)). One can recognise an ABC transporter 2 domain in the interval 1267 to 1501 (IELIDLKVRY…KSSMFIQLVS (235 aa)). 1301–1308 (GRTGSGKS) contributes to the ATP binding site.

The protein belongs to the ABC transporter superfamily. ABCC family. Conjugate transporter (TC 3.A.1.208) subfamily. As to expression, expressed in roots, leaves, stalks, tassels, silks, developing seeds and developing embryos.

It localises to the membrane. In terms of biological role, ABC transporter that may affect phytic acid transport and compartmentalization. May function directly or indirectly in removing phytic acid from the cytosol or in vesicle trafficking. Required for phytic acid accumulation in developing seeds. Phytic acid is the primary storage form of phosphorus in cereal grains and other plant seeds. The protein is ABC transporter C family MRP4 of Zea mays (Maize).